Here is an 885-residue protein sequence, read N- to C-terminus: Exosome complex component 10 (885 aa).

The span at 1 to 10 shows a compositional bias: basic and acidic residues; sequence MAPPSPREHQ. Disordered regions lie at residues 1-23 and 210-232; these read MAPPSPREHQSAPATGATKPDAE and KPLPQALSKERRERPQDRPEDLD. A Glycyl lysine isopeptide (Lys-Gly) (interchain with G-Cter in SUMO2) cross-link involves residue Lys-19. Over residues 217 to 230 the composition is skewed to basic and acidic residues; the sequence is SKERRERPQDRPED. The 3'-5' exonuclease domain maps to 289 to 455; it reads HVVSSLDELV…YIYDRMRLEL (167 aa). Mg(2+)-binding residues include Asp-313, Glu-315, Asp-371, and Asp-440. The HRDC domain occupies 503–583; the sequence is NSQQLTAFQL…QQAREMPLLK (81 aa). Lys-583 participates in a covalent cross-link: Glycyl lysine isopeptide (Lys-Gly) (interchain with G-Cter in SUMO1); alternate. Lys-583 participates in a covalent cross-link: Glycyl lysine isopeptide (Lys-Gly) (interchain with G-Cter in SUMO2); alternate. Residue Lys-710 forms a Glycyl lysine isopeptide (Lys-Gly) (interchain with G-Cter in SUMO2) linkage. The segment at 730 to 885 is disordered; it reads VQKEPKEAAK…RGFRHNWPKR (156 aa). 2 stretches are compositionally biased toward basic and acidic residues: residues 732 to 756 and 776 to 794; these read KEPKEAAKKKVAEQTAAREETKEES and ATKKRERATSDLRTIEQKQ. Ser-821 bears the Phosphoserine mark. Residues Lys-833, Lys-859, and Lys-873 each participate in a glycyl lysine isopeptide (Lys-Gly) (interchain with G-Cter in SUMO2) cross-link.

Belongs to the exosome component 10/RRP6 family. Component of the RNA exosome complex. The catalytically inactive RNA exosome core complex (Exo-9) associates with the catalytic subunit EXOSC10/RRP6 (via its N-terminus). Exo-9 may associate with DIS3 to form the nucleolar exosome complex, or DIS3L to form the cytoplasmic exosome complex. The RNA exosome complex interacts with cofactors C1D/RRP47, MPHOSPH6/MPP6 and MTREX/MTR4. Interacts with MTREX; the interaction with MTREX mediates the association of MTREX with nuclear RNA exosomes. Part of the small subunit (SSU) processome, composed of more than 70 proteins and the RNA chaperone small nucleolar RNA (snoRNA) U3. Interacts with ALYREF/THOC4. Interacts with DHX36; this interaction occurs in a RNase-insensitive manner. Interacts with NRDE2. Interacts (via C-terminus) with USP36 (via C-terminus); the interaction is facilitated by the association with RNA and promotes sumoylation of EXOSC10. It depends on Mg(2+) as a cofactor. Post-translationally, sumoylated by USP36; sumoylation does not significantly affect EXOSC10 nucleolar localization and association with core exosome and USP36, but regulates the nucleolar RNA exosome activity in rRNA processing by promoting binding of EXOSC10 to pre-rRNAs. Effects of sumoylation on EXOSC10 levels vary between different studies. Sumoylation of EXOSC10 is required for the modulation of EXOSC10 effects on cellular protein translation and cell proliferation. Sumoylation is promoted by mild hypothermia. In terms of tissue distribution, expressed in testis (at protein level).

The protein localises to the cytoplasm. The protein resides in the nucleus. It is found in the nucleolus. Its subcellular location is the nucleoplasm. Functionally, catalytic component of the RNA exosome complex which has 3'-&gt;5' exoribonuclease activity and participates in a multitude of cellular RNA processing and degradation events. In the nucleus, the RNA exosome complex is involved in proper maturation of stable RNA species such as rRNA, snRNA and snoRNA, in the elimination of RNA processing by-products and non-coding 'pervasive' transcripts, such as antisense RNA species and promoter-upstream transcripts (PROMPTs), and of mRNAs with processing defects, thereby limiting or excluding their export to the cytoplasm. Part of the small subunit (SSU) processome, first precursor of the small eukaryotic ribosomal subunit. During the assembly of the SSU processome in the nucleolus, many ribosome biogenesis factors, an RNA chaperone and ribosomal proteins associate with the nascent pre-rRNA and work in concert to generate RNA folding, modifications, rearrangements and cleavage as well as targeted degradation of pre-ribosomal RNA by the RNA exosome. The RNA exosome may be involved in Ig class switch recombination (CSR) and/or Ig variable region somatic hypermutation (SHM) by targeting AICDA deamination activity to transcribed dsDNA substrates. In the cytoplasm, the RNA exosome complex is involved in general mRNA turnover and specifically degrades inherently unstable mRNAs containing AU-rich elements (AREs) within their 3' untranslated regions, and in RNA surveillance pathways, preventing translation of aberrant mRNAs. It seems to be involved in degradation of histone mRNA. EXOSC10 is required for nucleolar localization of C1D and probably mediates the association of MTREX, C1D and MPHOSPH6 with the RNA exosome involved in the maturation of 5.8S rRNA. Plays a role in the recruitment of replication protein A complex (RPA) and RAD51 to DNA double-strand breaks caused by irradiation, contributing to DNA repair by homologous recombination. Regulates levels of damage-induced RNAs in order to prevent DNA-RNA hybrid formation at DNA double-strand breaks and limit DNA end resection after damage. Plays a role in oocyte development, maturation and survival. Required for normal testis development and mitotic division of spermatogonia. Plays a role in proper embryo development. Required for global protein translation. Required for cell proliferation. In Rattus norvegicus (Rat), this protein is Exosome complex component 10.